The chain runs to 366 residues: D-alanine--D-alanine ligase A (366 aa).

The region spanning lysine 145–glutamate 348 is the ATP-grasp domain. Valine 175 to glutamate 230 serves as a coordination point for ATP. Residues aspartate 302, glutamate 315, and asparagine 317 each coordinate Mg(2+).

Belongs to the D-alanine--D-alanine ligase family. Requires Mg(2+) as cofactor. Mn(2+) serves as cofactor.

The protein resides in the cytoplasm. The catalysed reaction is 2 D-alanine + ATP = D-alanyl-D-alanine + ADP + phosphate + H(+). It functions in the pathway cell wall biogenesis; peptidoglycan biosynthesis. Functionally, cell wall formation. The sequence is that of D-alanine--D-alanine ligase A from Chromobacterium violaceum (strain ATCC 12472 / DSM 30191 / JCM 1249 / CCUG 213 / NBRC 12614 / NCIMB 9131 / NCTC 9757 / MK).